The sequence spans 199 residues: TATA-box-binding protein (199 aa).

A run of 2 repeats spans residues 10 to 86 (IENI…VKLL) and 101 to 177 (VQNI…YNQL).

It belongs to the TBP family.

General factor that plays a role in the activation of archaeal genes transcribed by RNA polymerase. Binds specifically to the TATA box promoter element which lies close to the position of transcription initiation. The chain is TATA-box-binding protein from Pyrobaculum islandicum (strain DSM 4184 / JCM 9189 / GEO3).